Here is an 86-residue protein sequence, read N- to C-terminus: MAFKRKFTPKRKFCRFCADKNLPLDYKRPDILKDFVTERGKIIARRITGTCAKHQRRLTTEIKRSRQMALMHYTTVHSTDVKKKSI.

It belongs to the bacterial ribosomal protein bS18 family. As to quaternary structure, part of the 30S ribosomal subunit. Forms a tight heterodimer with protein bS6.

Binds as a heterodimer with protein bS6 to the central domain of the 16S rRNA, where it helps stabilize the platform of the 30S subunit. The protein is Small ribosomal subunit protein bS18 of Maridesulfovibrio salexigens (strain ATCC 14822 / DSM 2638 / NCIMB 8403 / VKM B-1763) (Desulfovibrio salexigens).